The primary structure comprises 349 residues: Twinfilin-2 (349 aa).

An N-acetylalanine modification is found at A2. 2 ADF-H domains span residues 4–139 (QTGI…KHLS) and 177–313 (GLAF…DEVH). K14 bears the N6-acetyllysine mark. The residue at position 309 (Y309) is a Phosphotyrosine. The segment at 322–349 (AFAKPKGPGGKRGHKRLIRGPGENGEDS) is disordered. Basic residues predominate over residues 330–339 (GGKRGHKRLI). S349 is modified (phosphoserine).

The protein belongs to the actin-binding proteins ADF family. Twinfilin subfamily. In terms of assembly, interacts with G-actin; ADP-actin form and capping protein (CP). Isoform 2 interacts (via its N-terminal ADF-H domain) with G-actin (ADP-bound form) with significantly higher affinity than isoform 1. May also be able to interact with TWF1 and phosphoinositides, PI(4,5)P2. When bound to PI(4,5)P2, it is down-regulated. Interacts with MYO7A. Phosphorylated on both serine/threonine and tyrosine. In terms of tissue distribution, isoform 1 is ubiquitously expressed (at protein level). Isoform 2 expression is restricted to heart and skeletal muscle where it is the predominant form.

The protein localises to the cytoplasm. Its subcellular location is the cytoskeleton. The protein resides in the perinuclear region. It is found in the cell projection. It localises to the stereocilium. In terms of biological role, actin-binding protein involved in motile and morphological processes. Inhibits actin polymerization, likely by sequestering G-actin. By capping the barbed ends of filaments, it also regulates motility. Seems to play an important role in clathrin-mediated endocytosis and distribution of endocytic organelles. May play a role in regulating the mature length of the middle and short rows of stereocilia. The chain is Twinfilin-2 (Twf2) from Mus musculus (Mouse).